Here is a 619-residue protein sequence, read N- to C-terminus: Dihydroxy-acid dehydratase (619 aa).

D81 contacts Mg(2+). C122 is a binding site for [2Fe-2S] cluster. Positions 123 and 124 each coordinate Mg(2+). K124 carries the post-translational modification N6-carboxylysine. C195 is a binding site for [2Fe-2S] cluster. E491 is a binding site for Mg(2+). The active-site Proton acceptor is S517.

Belongs to the IlvD/Edd family. In terms of assembly, homodimer. It depends on [2Fe-2S] cluster as a cofactor. The cofactor is Mg(2+).

It carries out the reaction (2R)-2,3-dihydroxy-3-methylbutanoate = 3-methyl-2-oxobutanoate + H2O. The enzyme catalyses (2R,3R)-2,3-dihydroxy-3-methylpentanoate = (S)-3-methyl-2-oxopentanoate + H2O. The protein operates within amino-acid biosynthesis; L-isoleucine biosynthesis; L-isoleucine from 2-oxobutanoate: step 3/4. It participates in amino-acid biosynthesis; L-valine biosynthesis; L-valine from pyruvate: step 3/4. Functionally, functions in the biosynthesis of branched-chain amino acids. Catalyzes the dehydration of (2R,3R)-2,3-dihydroxy-3-methylpentanoate (2,3-dihydroxy-3-methylvalerate) into 2-oxo-3-methylpentanoate (2-oxo-3-methylvalerate) and of (2R)-2,3-dihydroxy-3-methylbutanoate (2,3-dihydroxyisovalerate) into 2-oxo-3-methylbutanoate (2-oxoisovalerate), the penultimate precursor to L-isoleucine and L-valine, respectively. The protein is Dihydroxy-acid dehydratase of Rhodopseudomonas palustris (strain HaA2).